A 145-amino-acid chain; its full sequence is Regulator of sigma D (145 aa).

The protein belongs to the Rsd/AlgQ family. Interacts with RpoD.

Its subcellular location is the cytoplasm. In terms of biological role, binds RpoD and negatively regulates RpoD-mediated transcription activation by preventing the interaction between the primary sigma factor RpoD with the catalytic core of the RNA polymerase and with promoter DNA. May be involved in replacement of the RNA polymerase sigma subunit from RpoD to RpoS during the transition from exponential growth to the stationary phase. The chain is Regulator of sigma D from Sodalis glossinidius (strain morsitans).